The following is a 343-amino-acid chain: Transcription factor MYB11 (343 aa).

HTH myb-type domains are found at residues 9–61 (KVGI…INYL) and 62–116 (RSDI…SRKL). DNA-binding regions (H-T-H motif) lie at residues 37–61 (WRSL…INYL) and 89–112 (WSTI…NSHL). Residues 126-146 (ANTVENAPPPPKRRPGRTSRS) form a disordered region.

Expressed in seedlings, roots, cotyledons, leaves and apical meristems.

It is found in the nucleus. Its function is as follows. Modulates overall growth by reducing the proliferation activity of meristematic cells and delaying development. Flavonol-specific transcription activator involved in the regulation of several genes of flavonoid biosynthesis. Activates the expression of CHS, CHI, F3H and FLS1. Confers tolerance to UV-B. This chain is Transcription factor MYB11, found in Arabidopsis thaliana (Mouse-ear cress).